Consider the following 122-residue polypeptide: Large ribosomal subunit protein uL14 (122 aa).

This sequence belongs to the universal ribosomal protein uL14 family. Part of the 50S ribosomal subunit. Forms a cluster with proteins L3 and L19. In the 70S ribosome, L14 and L19 interact and together make contacts with the 16S rRNA in bridges B5 and B8.

In terms of biological role, binds to 23S rRNA. Forms part of two intersubunit bridges in the 70S ribosome. The sequence is that of Large ribosomal subunit protein uL14 from Neisseria gonorrhoeae (strain ATCC 700825 / FA 1090).